Here is a 518-residue protein sequence, read N- to C-terminus: Serine--tRNA ligase, mitochondrial (518 aa).

A mitochondrion-targeting transit peptide spans 1 to 34; it reads MAASMARLWWPFLARQGLRSRGRCVCSQNPRRSF. Position 110 is an N6-acetyllysine (K110). N6-succinyllysine is present on K195. 299-301 contacts L-serine; that stretch reads TAE. ATP is bound at residue 330–332; it reads RAE. K337 is modified (N6-succinyllysine). Residue V345 participates in ATP binding. An L-serine-binding site is contributed by E352. Position 418-421 (418-421) interacts with ATP; sequence EVTS. T453 contacts L-serine. Residues 497–518 form a disordered region; the sequence is PLQYIGPNQPQKPRLPGQSATR.

This sequence belongs to the class-II aminoacyl-tRNA synthetase family. Type-1 seryl-tRNA synthetase subfamily. Homodimer. The tRNA molecule probably binds across the dimer. In terms of tissue distribution, ubiquitous.

The protein localises to the mitochondrion matrix. The enzyme catalyses tRNA(Ser) + L-serine + ATP = L-seryl-tRNA(Ser) + AMP + diphosphate + H(+). The catalysed reaction is tRNA(Sec) + L-serine + ATP = L-seryl-tRNA(Sec) + AMP + diphosphate + H(+). It functions in the pathway aminoacyl-tRNA biosynthesis; selenocysteinyl-tRNA(Sec) biosynthesis; L-seryl-tRNA(Sec) from L-serine and tRNA(Sec): step 1/1. In terms of biological role, catalyzes the attachment of serine to tRNA(Ser). Is also probably able to aminoacylate tRNA(Sec) with serine, to form the misacylated tRNA L-seryl-tRNA(Sec), which will be further converted into selenocysteinyl-tRNA(Sec). The sequence is that of Serine--tRNA ligase, mitochondrial (Sars2) from Mus musculus (Mouse).